Consider the following 785-residue polypeptide: Phenylalanine--tRNA ligase beta subunit (785 aa).

Positions 39 to 150 constitute a tRNA-binding domain; the sequence is RTWAAGVVVG…ASLPLGLDVG (112 aa). A B5 domain is found at 400-476; that stretch reads RENRVVSLRP…RVVGYDRFAP (77 aa). Mg(2+)-binding residues include Asp454, Asp460, Glu463, and Glu464. Positions 692–784 constitute an FDX-ACB domain; the sequence is SPFPPAARDL…LAERYSVDLR (93 aa).

The protein belongs to the phenylalanyl-tRNA synthetase beta subunit family. Type 1 subfamily. As to quaternary structure, tetramer of two alpha and two beta subunits. It depends on Mg(2+) as a cofactor.

It localises to the cytoplasm. The catalysed reaction is tRNA(Phe) + L-phenylalanine + ATP = L-phenylalanyl-tRNA(Phe) + AMP + diphosphate + H(+). This Gloeobacter violaceus (strain ATCC 29082 / PCC 7421) protein is Phenylalanine--tRNA ligase beta subunit.